We begin with the raw amino-acid sequence, 150 residues long: Deoxyuridine 5'-triphosphate nucleotidohydrolase (150 aa).

Substrate is bound by residues 69-71 (RSG), Asn82, 86-88 (LID), and Met96.

The protein belongs to the dUTPase family. It depends on Mg(2+) as a cofactor.

The catalysed reaction is dUTP + H2O = dUMP + diphosphate + H(+). It participates in pyrimidine metabolism; dUMP biosynthesis; dUMP from dCTP (dUTP route): step 2/2. Functionally, this enzyme is involved in nucleotide metabolism: it produces dUMP, the immediate precursor of thymidine nucleotides and it decreases the intracellular concentration of dUTP so that uracil cannot be incorporated into DNA. This Alcanivorax borkumensis (strain ATCC 700651 / DSM 11573 / NCIMB 13689 / SK2) protein is Deoxyuridine 5'-triphosphate nucleotidohydrolase.